The sequence spans 753 residues: Nigerose phosphorylase (753 aa).

348–349 (WD) lines the substrate pocket. The Proton donor role is filled by Glu490. 604–605 (KQ) is a binding site for substrate.

It belongs to the glycosyl hydrolase 65 family. Homodimer.

Its subcellular location is the cytoplasm. It catalyses the reaction nigerose + phosphate = beta-D-glucose 1-phosphate + D-glucose. Does not require divalent metal ions. Its function is as follows. Catalyzes the reversible phosphorolysis of nigerose. Also shows a weak activity on kojibiose. The chain is Nigerose phosphorylase from Lachnoclostridium phytofermentans (strain ATCC 700394 / DSM 18823 / ISDg) (Clostridium phytofermentans).